Here is a 614-residue protein sequence, read N- to C-terminus: Dihydroxy-acid dehydratase (614 aa).

D81 contributes to the Mg(2+) binding site. Residue C122 participates in [2Fe-2S] cluster binding. The Mg(2+) site is built by D123 and K124. Position 124 is an N6-carboxylysine (K124). C196 provides a ligand contact to [2Fe-2S] cluster. E492 is a Mg(2+) binding site. S518 functions as the Proton acceptor in the catalytic mechanism.

Belongs to the IlvD/Edd family. Homodimer. Requires [2Fe-2S] cluster as cofactor. Mg(2+) serves as cofactor.

The enzyme catalyses (2R)-2,3-dihydroxy-3-methylbutanoate = 3-methyl-2-oxobutanoate + H2O. It carries out the reaction (2R,3R)-2,3-dihydroxy-3-methylpentanoate = (S)-3-methyl-2-oxopentanoate + H2O. It functions in the pathway amino-acid biosynthesis; L-isoleucine biosynthesis; L-isoleucine from 2-oxobutanoate: step 3/4. The protein operates within amino-acid biosynthesis; L-valine biosynthesis; L-valine from pyruvate: step 3/4. Its function is as follows. Functions in the biosynthesis of branched-chain amino acids. Catalyzes the dehydration of (2R,3R)-2,3-dihydroxy-3-methylpentanoate (2,3-dihydroxy-3-methylvalerate) into 2-oxo-3-methylpentanoate (2-oxo-3-methylvalerate) and of (2R)-2,3-dihydroxy-3-methylbutanoate (2,3-dihydroxyisovalerate) into 2-oxo-3-methylbutanoate (2-oxoisovalerate), the penultimate precursor to L-isoleucine and L-valine, respectively. The protein is Dihydroxy-acid dehydratase of Ruegeria sp. (strain TM1040) (Silicibacter sp.).